Here is a 189-residue protein sequence, read N- to C-terminus: Endoribonuclease YbeY (189 aa).

Zn(2+)-binding residues include H146, H150, and H156.

It belongs to the endoribonuclease YbeY family. Zn(2+) is required as a cofactor.

It localises to the cytoplasm. Its function is as follows. Single strand-specific metallo-endoribonuclease involved in late-stage 70S ribosome quality control and in maturation of the 3' terminus of the 16S rRNA. The protein is Endoribonuclease YbeY of Prochlorococcus marinus (strain MIT 9211).